Reading from the N-terminus, the 61-residue chain is Lens epithelial cell protein LEP503 (61 aa).

As to expression, preferentially expressed in the lens epithelial cells.

This Rattus norvegicus (Rat) protein is Lens epithelial cell protein LEP503 (Lenep).